A 61-amino-acid polypeptide reads, in one-letter code: Large ribosomal subunit protein uL29 (61 aa).

The protein belongs to the universal ribosomal protein uL29 family.

The sequence is that of Large ribosomal subunit protein uL29 from Nitratidesulfovibrio vulgaris (strain ATCC 29579 / DSM 644 / CCUG 34227 / NCIMB 8303 / VKM B-1760 / Hildenborough) (Desulfovibrio vulgaris).